Here is an 87-residue protein sequence, read N- to C-terminus: Omega-lycotoxin-Am1d (87 aa).

An N-terminal signal peptide occupies residues 1 to 17 (MKLSIFFVLFFIAIAYC). Positions 18–40 (QPEFLDDEEDEVEETLPVAEEGR) are excised as a propeptide. Disulfide bonds link cysteine 44–cysteine 59, cysteine 51–cysteine 64, cysteine 58–cysteine 84, and cysteine 66–cysteine 82.

The protein belongs to the neurotoxin omega-lctx family. Expressed by the venom gland.

The protein localises to the secreted. Functionally, modulates Cav2.1/CACNA1A voltage-gated calcium channels (P/Q-type currents) in rat cerebellar Purkinje cells and hippocampal CA1-CA3 neurons. At saturating concentrations (&gt;10 nM) decelerates activation kinetics and slightly increases peak amplitude without affecting deactivation kinetics. In vivo, does not cause death when intravenously injected into mice. In rat models, through its activity on Cav2.1/CACNA1A, has an ameliorative effect on memory defects provoked by hyperstimulation of N-methyl-D-aspartate receptors (NMDARs) in the hippocampus. The sequence is that of Omega-lycotoxin-Am1d from Alopecosa marikovskyi (Wolf spider).